A 66-amino-acid chain; its full sequence is Large ribosomal subunit protein bL31 (66 aa).

Zn(2+)-binding residues include Cys16, Cys18, Cys36, and Cys39.

The protein belongs to the bacterial ribosomal protein bL31 family. Type A subfamily. Part of the 50S ribosomal subunit. Requires Zn(2+) as cofactor.

Its function is as follows. Binds the 23S rRNA. This chain is Large ribosomal subunit protein bL31, found in Campylobacter lari (strain RM2100 / D67 / ATCC BAA-1060).